We begin with the raw amino-acid sequence, 198 residues long: Regulation of enolase protein 1 (198 aa).

The protein resides in the cytoplasm. Functions in the galactose metabolic pathway via the GAL83 protein and that it may control the level of ENO1. The protein is Regulation of enolase protein 1 (REE1) of Saccharomyces cerevisiae (strain ATCC 204508 / S288c) (Baker's yeast).